Here is a 247-residue protein sequence, read N- to C-terminus: Transcription factor otaR1 (247 aa).

Disordered stretches follow at residues 1-48 and 100-143; these read MEPA…ETSM and DNAS…PLGN. Residues 23-47 are compositionally biased toward low complexity; sequence DESSSTGLSLGSLLSSSNDLSSETS. Residues 134–143 show a composition bias toward polar residues; sequence ANPTSVPLGN. A basic motif region spans residues 156-196; it reads KKYHEKYKERNRVAAGKSRQKQVDLIELLQAEQREEERRRK. Positions 156 to 219 constitute a bZIP domain; sequence KKYHEKYKER…LDLKQELQHH (64 aa). Positions 198 to 212 are leucine-zipper; that stretch reads LERELSQIHKELLDL.

The protein resides in the nucleus. Its function is as follows. Transcription factor; part of the gene cluster that mediates the biosynthesis of ochratoxin A (OTA), a mycotoxin demonstrated to have nephrotoxic, immunotoxic, genotoxic, neurotoxic, and teratogenic properties. Positively regulates the expression of the cluster genes otaA, otaB, otaC and otaD, and the subsequent production of OTA. The sequence is that of Transcription factor otaR1 from Aspergillus carbonarius (strain ITEM 5010).